A 360-amino-acid chain; its full sequence is Type II methyltransferase M.BglII (360 aa).

Residues 316–341 (TRQRKGSKPSLDSKAHPEEHHKKEIV) form a disordered region. Basic and acidic residues predominate over residues 326–341 (LDSKAHPEEHHKKEIV).

It belongs to the N(4)/N(6)-methyltransferase family. N(4) subfamily.

The enzyme catalyses a 2'-deoxycytidine in DNA + S-adenosyl-L-methionine = an N(4)-methyl-2'-deoxycytidine in DNA + S-adenosyl-L-homocysteine + H(+). Functionally, a beta subtype methylase, recognizes the double-stranded sequence 5'-AGATCT-3', methylates C-5 on both strands, and protects the DNA from cleavage by the BglII endonuclease. In Bacillus subtilis, this protein is Type II methyltransferase M.BglII.